The following is a 195-amino-acid chain: Inner membrane protein YohC (195 aa).

Over 1-32 (MSHVWGLFSHPDREMQVINRENETISHHYTHH) the chain is Cytoplasmic. A helical membrane pass occupies residues 33 to 55 (VLLMAAIPVICAFIGTTQIGWNF). The Periplasmic segment spans residues 56–64 (GDGTILKLS). The helical transmembrane segment at 65-87 (WFTGLALAVLFYGVMLAGVAVMG) threads the bilayer. Topologically, residues 88–107 (RVIWWMARNYPQRPSLAHCM) are cytoplasmic. Residues 108-130 (VFAGYVATPLFLSGLVALYPLVW) traverse the membrane as a helical segment. Over 131–134 (LCAL) the chain is Periplasmic. The chain crosses the membrane as a helical span at residues 135-157 (VGTVALFYTGYLLYLGIPSFLNI). Topologically, residues 158–169 (NKEEGLSFSSST) are cytoplasmic. Residues 170-192 (LAIGVLVLEVLLALTVILWGYGY) form a helical membrane-spanning segment. Residues 193–195 (RLF) lie on the Periplasmic side of the membrane.

It is found in the cell inner membrane. The sequence is that of Inner membrane protein YohC (yohC) from Escherichia coli O6:H1 (strain CFT073 / ATCC 700928 / UPEC).